A 290-amino-acid polypeptide reads, in one-letter code: Inositol monophosphatase 2 (290 aa).

Residues glutamate 83, aspartate 103, isoleucine 105, and aspartate 106 each contribute to the Mg(2+) site. Glutamate 83 serves as a coordination point for substrate. Substrate is bound by residues 105-108, 207-209, glutamine 226, and aspartate 233; these read IDGT and GSS. Mg(2+) is bound at residue aspartate 233.

Belongs to the inositol monophosphatase superfamily. As to quaternary structure, homodimer. It depends on Mg(2+) as a cofactor.

Its subcellular location is the cytoplasm. The catalysed reaction is a myo-inositol phosphate + H2O = myo-inositol + phosphate. It functions in the pathway polyol metabolism; myo-inositol biosynthesis; myo-inositol from D-glucose 6-phosphate: step 2/2. Functionally, can use myo-inositol monophosphates, scylloinositol 1,4-diphosphate, glucose-1-phosphate, beta-glycerophosphate, and 2'-AMP as substrates. Has been implicated as the pharmacological target for lithium Li(+) action in brain. The polypeptide is Inositol monophosphatase 2 (Impa2) (Rattus norvegicus (Rat)).